Consider the following 150-residue polypeptide: Aspartate carbamoyltransferase regulatory chain (150 aa).

Positions 105, 110, 133, and 136 each coordinate Zn(2+).

This sequence belongs to the PyrI family. Contains catalytic and regulatory chains. The cofactor is Zn(2+).

Functionally, involved in allosteric regulation of aspartate carbamoyltransferase. The chain is Aspartate carbamoyltransferase regulatory chain from Thermococcus sibiricus (strain DSM 12597 / MM 739).